The primary structure comprises 94 residues: Large ribosomal subunit protein bL28 (94 aa).

Positions 1-21 (MARRCEVTGRGTVSGNNVSHS) are disordered. The segment covering 11 to 20 (GTVSGNNVSH) has biased composition (polar residues).

It belongs to the bacterial ribosomal protein bL28 family.

This is Large ribosomal subunit protein bL28 from Leptospira interrogans serogroup Icterohaemorrhagiae serovar copenhageni (strain Fiocruz L1-130).